A 663-amino-acid chain; its full sequence is MAPKRVVQLSLKMPTHAVCVVGVEAHVDIHSDVPKGANSFRVSGSSGVEVFMVYNRTRVKEPIGKARWPLDTDADMVVSVGTASKELKDFKVRVSYFGEQEDQALGRSVLYLTGVDISLEVDTGRTGKVKRSQGDKKTWRWGPEGYGAILLVNCDRDNHRSAEPDLTHSWLMSLADLQDMSPMLLSCNGPDKLFDSHKLVLNVPFSDSKRVRVFCARGGNSLSDYKQVLGPQCLSYEVERQPGEQEIKFYVEGLTFPDADFLGLVSLSVSLVDPGTLPEVTLFTDTVGFRMAPWIMTPNTQPPEELYVCRVMDTHGSNEKFLEDMSYLTLKANCKLTICPQVENRNDRWIQDEMEFGYIEAPHKSFPVVFDSPRNRGLKDFPYKRILGPDFGYVTREIPLPGPSSLDSFGNLDVSPPVTVGGTEYPLGRILIGSSFPKSGGRQMARAVRNFLKAQQVQAPVELYSDWLSVGHVDEFLTFVPTSDQKGFRLLLASPSACLKLFQEKKEEGYGEAAQFDGLKHQAKRSINEMLADRHLQRDNLHAQKCIDWNRNVLKRELGLAESDIVDIPQLFFLKNFYAEAFFPDMVNMVVLGKYLGIPKPYGPIINGRCCLEEKVQSLLEPLGLHCIFIDDYLSYHELQGEIHCGTNVRRKPFPFKWWNMVP.

Residues asparagine 153, aspartate 155, aspartate 157, aspartate 165, aspartate 176, aspartate 179, glutamine 351, glutamate 353, lysine 364, aspartate 371, serine 372, asparagine 375, phenylalanine 409, and leucine 412 each coordinate Ca(2+). Cysteine 645 (nucleophile) is an active-site residue.

This sequence belongs to the protein arginine deiminase family. As to quaternary structure, monomer. The cofactor is Ca(2+). In terms of tissue distribution, detected in epidermal keratinocytes (at protein level). Epidermis, prostate, testis, placenta, spleen and thymus.

The protein resides in the cytoplasm. It carries out the reaction L-arginyl-[protein] + H2O = L-citrullyl-[protein] + NH4(+). Functionally, catalyzes the deimination of arginine residues of proteins. The sequence is that of Protein-arginine deiminase type-1 (PADI1) from Homo sapiens (Human).